The primary structure comprises 315 residues: tRNA dimethylallyltransferase (315 aa).

13 to 20 contributes to the ATP binding site; sequence GPTASGKT. 15-20 contacts substrate; that stretch reads TASGKT. Interaction with substrate tRNA regions lie at residues 38-41, 162-166, 243-248, and 276-283; these read DSAL, QRLSR, RCVGYR, and KRQITWLR.

This sequence belongs to the IPP transferase family. Monomer. Mg(2+) serves as cofactor.

The enzyme catalyses adenosine(37) in tRNA + dimethylallyl diphosphate = N(6)-dimethylallyladenosine(37) in tRNA + diphosphate. Catalyzes the transfer of a dimethylallyl group onto the adenine at position 37 in tRNAs that read codons beginning with uridine, leading to the formation of N6-(dimethylallyl)adenosine (i(6)A). This chain is tRNA dimethylallyltransferase, found in Vibrio vulnificus (strain CMCP6).